The primary structure comprises 373 residues: tRNA-specific 2-thiouridylase MnmA (373 aa).

ATP contacts are provided by residues 12–19 (GMSGGVDS) and M38. The tract at residues 98-100 (NPD) is interaction with target base in tRNA. C103 functions as the Nucleophile in the catalytic mechanism. C103 and C200 are disulfide-bonded. G127 is an ATP binding site. Residues 150–152 (KDQ) form an interaction with tRNA region. C200 functions as the Cysteine persulfide intermediate in the catalytic mechanism. Residues 312–313 (RY) are interaction with tRNA.

It belongs to the MnmA/TRMU family.

Its subcellular location is the cytoplasm. It carries out the reaction S-sulfanyl-L-cysteinyl-[protein] + uridine(34) in tRNA + AH2 + ATP = 2-thiouridine(34) in tRNA + L-cysteinyl-[protein] + A + AMP + diphosphate + H(+). Catalyzes the 2-thiolation of uridine at the wobble position (U34) of tRNA, leading to the formation of s(2)U34. This is tRNA-specific 2-thiouridylase MnmA from Streptococcus uberis (strain ATCC BAA-854 / 0140J).